Reading from the N-terminus, the 383-residue chain is Lipid-A-disaccharide synthase (383 aa).

It belongs to the LpxB family.

It carries out the reaction a lipid X + a UDP-2-N,3-O-bis[(3R)-3-hydroxyacyl]-alpha-D-glucosamine = a lipid A disaccharide + UDP + H(+). The protein operates within bacterial outer membrane biogenesis; LPS lipid A biosynthesis. Functionally, condensation of UDP-2,3-diacylglucosamine and 2,3-diacylglucosamine-1-phosphate to form lipid A disaccharide, a precursor of lipid A, a phosphorylated glycolipid that anchors the lipopolysaccharide to the outer membrane of the cell. The chain is Lipid-A-disaccharide synthase from Myxococcus xanthus (strain DK1622).